The chain runs to 497 residues: Cobyric acid synthase (497 aa).

The GATase cobBQ-type domain occupies 250-445; it reads EVTIAVIRLP…LHGIFNNGPW (196 aa). Catalysis depends on Cys-331, which acts as the Nucleophile. His-437 is an active-site residue.

Belongs to the CobB/CobQ family. CobQ subfamily.

The protein operates within cofactor biosynthesis; adenosylcobalamin biosynthesis. Catalyzes amidations at positions B, D, E, and G on adenosylcobyrinic A,C-diamide. NH(2) groups are provided by glutamine, and one molecule of ATP is hydrogenolyzed for each amidation. The protein is Cobyric acid synthase of Acaryochloris marina (strain MBIC 11017).